The primary structure comprises 545 residues: Ribulokinase (545 aa).

The protein belongs to the ribulokinase family.

The enzyme catalyses D-ribulose + ATP = D-ribulose 5-phosphate + ADP + H(+). It carries out the reaction L-ribulose + ATP = L-ribulose 5-phosphate + ADP + H(+). Its pathway is carbohydrate degradation; L-arabinose degradation via L-ribulose; D-xylulose 5-phosphate from L-arabinose (bacterial route): step 2/3. This Staphylococcus aureus (strain MRSA252) protein is Ribulokinase.